Here is an 89-residue protein sequence, read N- to C-terminus: Small ribosomal subunit protein uS15 (89 aa).

The protein belongs to the universal ribosomal protein uS15 family. In terms of assembly, part of the 30S ribosomal subunit. Forms a bridge to the 50S subunit in the 70S ribosome, contacting the 23S rRNA.

One of the primary rRNA binding proteins, it binds directly to 16S rRNA where it helps nucleate assembly of the platform of the 30S subunit by binding and bridging several RNA helices of the 16S rRNA. Functionally, forms an intersubunit bridge (bridge B4) with the 23S rRNA of the 50S subunit in the ribosome. The chain is Small ribosomal subunit protein uS15 from Staphylococcus saprophyticus subsp. saprophyticus (strain ATCC 15305 / DSM 20229 / NCIMB 8711 / NCTC 7292 / S-41).